The chain runs to 117 residues: Appetite-regulating hormone (117 aa).

The signal sequence occupies residues 1–23 (MPSPGTVCSLLLLGMLWLDLAMA). Ser26 carries the O-decanoyl serine; alternate lipid modification. Ser26 carries O-hexanoyl serine; alternate lipidation. Residue Ser26 is the site of O-octanoyl serine; alternate attachment. Positions 29–50 (SPEHQRVQQRKESKKPPAKLQP) are disordered. The span at 31-43 (EHQRVQQRKESKK) shows a compositional bias: basic and acidic residues. Residues 52–75 (ALAGWLRPEDGGQAEGAEDELEVR) constitute a propeptide, removed in mature form. Leu98 is modified (leucine amide). Positions 99–117 (GKFLQDILWEEAKEAPADK) are cleaved as a propeptide — removed in mature form.

This sequence belongs to the motilin family. O-octanoylated by GOAT/MBOAT4. O-octanoylation or O-decanoylation is essential for ghrelin activity. The O-decanoylated forms Ghrelin-27-C10 and Ghrelin-28-C10 differ in the length of the carbon backbone of the carboxylic acid bound to Ser-26. A small fraction of ghrelin, ghrelin-28-C10:1, may be modified with a singly unsaturated carboxylic acid. Also O-acetylated and O-butyrylated on Ser-26 to minor levels. In terms of processing, amidation of Leu-98 is essential for obestatin activity. Highest level in stomach. All forms are found in serum as well. Other tissues compensate for the loss of ghrelin synthesis in the stomach following gastrectomy.

Its subcellular location is the secreted. Its function is as follows. Ghrelin is the ligand for growth hormone secretagogue receptor type 1 (GHSR). Induces the release of growth hormone from the pituitary. Has an appetite-stimulating effect, induces adiposity and stimulates gastric acid secretion. Involved in growth regulation. Functionally, may be the ligand for GPR39. May have an appetite-reducing effect resulting in decreased food intake. May reduce gastric emptying activity and jejunal motility. The protein is Appetite-regulating hormone (GHRL) of Homo sapiens (Human).